The sequence spans 176 residues: NAD(P)H-quinone oxidoreductase subunit 6, chloroplastic (176 aa).

5 consecutive transmembrane segments (helical) span residues 10-30 (FLLVFLGSGLILGSLGVVLLT), 32-52 (PIFSAFSLGLTLVCISLLYIL), 63-83 (LLIYVGAINVLIIFGVMFMNG), 92-112 (LWTVGDGMTLMVCTSIFISLI), and 152-172 (FFLPFELISIILLAALIGAIV).

This sequence belongs to the complex I subunit 6 family. As to quaternary structure, NDH is composed of at least 16 different subunits, 5 of which are encoded in the nucleus.

Its subcellular location is the plastid. The protein resides in the chloroplast thylakoid membrane. The enzyme catalyses a plastoquinone + NADH + (n+1) H(+)(in) = a plastoquinol + NAD(+) + n H(+)(out). The catalysed reaction is a plastoquinone + NADPH + (n+1) H(+)(in) = a plastoquinol + NADP(+) + n H(+)(out). Its function is as follows. NDH shuttles electrons from NAD(P)H:plastoquinone, via FMN and iron-sulfur (Fe-S) centers, to quinones in the photosynthetic chain and possibly in a chloroplast respiratory chain. The immediate electron acceptor for the enzyme in this species is believed to be plastoquinone. Couples the redox reaction to proton translocation, and thus conserves the redox energy in a proton gradient. The protein is NAD(P)H-quinone oxidoreductase subunit 6, chloroplastic (ndhG) of Lotus japonicus (Lotus corniculatus var. japonicus).